The chain runs to 101 residues: Small ribosomal subunit protein uS14 (101 aa).

The protein belongs to the universal ribosomal protein uS14 family. As to quaternary structure, part of the 30S ribosomal subunit. Contacts proteins S3 and S10.

In terms of biological role, binds 16S rRNA, required for the assembly of 30S particles and may also be responsible for determining the conformation of the 16S rRNA at the A site. This is Small ribosomal subunit protein uS14 from Erythrobacter litoralis (strain HTCC2594).